Here is a 436-residue protein sequence, read N- to C-terminus: 3-ketoacyl-CoA thiolase (436 aa).

Cys-99 acts as the Acyl-thioester intermediate in catalysis. Active-site proton acceptor residues include His-392 and Cys-422.

This sequence belongs to the thiolase-like superfamily. Thiolase family. As to quaternary structure, heterotetramer of two alpha chains (FadJ) and two beta chains (FadI).

The protein resides in the cytoplasm. It carries out the reaction an acyl-CoA + acetyl-CoA = a 3-oxoacyl-CoA + CoA. It participates in lipid metabolism; fatty acid beta-oxidation. Catalyzes the final step of fatty acid oxidation in which acetyl-CoA is released and the CoA ester of a fatty acid two carbons shorter is formed. This chain is 3-ketoacyl-CoA thiolase, found in Salmonella choleraesuis (strain SC-B67).